Reading from the N-terminus, the 511-residue chain is 2-isopropylmalate synthase (511 aa).

Residues 1–16 (MTRKIDIFDTTLRDGE) show a composition bias toward basic and acidic residues. The disordered stretch occupies residues 1-23 (MTRKIDIFDTTLRDGEQSPGASM). The Pyruvate carboxyltransferase domain maps to 5-268 (IDIFDTTLRD…HTDVVTQELT (264 aa)). Mn(2+) is bound by residues Asp-14, His-203, His-205, and Asn-239. The tract at residues 392–511 (ALESVQVVCG…IQTTRSKQGK (120 aa)) is regulatory domain.

The protein belongs to the alpha-IPM synthase/homocitrate synthase family. LeuA type 1 subfamily. Homodimer. Mn(2+) is required as a cofactor.

Its subcellular location is the cytoplasm. It catalyses the reaction 3-methyl-2-oxobutanoate + acetyl-CoA + H2O = (2S)-2-isopropylmalate + CoA + H(+). The protein operates within amino-acid biosynthesis; L-leucine biosynthesis; L-leucine from 3-methyl-2-oxobutanoate: step 1/4. Functionally, catalyzes the condensation of the acetyl group of acetyl-CoA with 3-methyl-2-oxobutanoate (2-ketoisovalerate) to form 3-carboxy-3-hydroxy-4-methylpentanoate (2-isopropylmalate). This Olsenella uli (strain ATCC 49627 / DSM 7084 / CCUG 31166 / CIP 109912 / JCM 12494 / LMG 11480 / NCIMB 702895 / VPI D76D-27C) (Lactobacillus uli) protein is 2-isopropylmalate synthase.